The chain runs to 277 residues: Shikimate dehydrogenase (NADP(+)) (277 aa).

Residues 19 to 21 and T66 contribute to the shikimate site; that span reads SKS. K70 (proton acceptor) is an active-site residue. An NADP(+)-binding site is contributed by D82. Positions 91 and 107 each coordinate shikimate. NADP(+) is bound by residues 133 to 137, 157 to 162, and L222; these read GAGGA and NRTRAR. Position 224 (Y224) interacts with shikimate. An NADP(+)-binding site is contributed by G245.

The protein belongs to the shikimate dehydrogenase family. As to quaternary structure, homodimer.

It catalyses the reaction shikimate + NADP(+) = 3-dehydroshikimate + NADPH + H(+). It participates in metabolic intermediate biosynthesis; chorismate biosynthesis; chorismate from D-erythrose 4-phosphate and phosphoenolpyruvate: step 4/7. In terms of biological role, involved in the biosynthesis of the chorismate, which leads to the biosynthesis of aromatic amino acids. Catalyzes the reversible NADPH linked reduction of 3-dehydroshikimate (DHSA) to yield shikimate (SA). The sequence is that of Shikimate dehydrogenase (NADP(+)) from Roseobacter denitrificans (strain ATCC 33942 / OCh 114) (Erythrobacter sp. (strain OCh 114)).